The following is a 317-amino-acid chain: Putative cuticle collagen 80 (317 aa).

Residues 80–262 (CNCGPQASNC…GAPGNDGAPG (183 aa)) are disordered. 3 triple-helical region regions span residues 92–124 (GPPG…AGPA), 137–199 (GAPG…SGQR), and 202–264 (GLPG…PGSD). Low complexity-rich tracts occupy residues 108 to 124 (QPGP…AGPA), 135 to 145 (PQGAPGPAGAP), and 175 to 206 (AGDA…LPGP). 2 stretches are compositionally biased toward pro residues: residues 207-219 (SGRP…PGAP) and 230-240 (PAGPPGPPGPN). A compositionally biased stretch (low complexity) spans 242 to 262 (QPGHPGQDGQPGAPGNDGAPG).

This sequence belongs to the cuticular collagen family. Collagen polypeptide chains are complexed within the cuticle by disulfide bonds and other types of covalent cross-links.

In terms of biological role, nematode cuticles are composed largely of collagen-like proteins. The cuticle functions both as an exoskeleton and as a barrier to protect the worm from its environment. The protein is Putative cuticle collagen 80 (col-80) of Caenorhabditis elegans.